The sequence spans 246 residues: Small ribosomal subunit protein uS2 (246 aa).

It belongs to the universal ribosomal protein uS2 family.

The protein is Small ribosomal subunit protein uS2 of Burkholderia vietnamiensis (strain G4 / LMG 22486) (Burkholderia cepacia (strain R1808)).